We begin with the raw amino-acid sequence, 373 residues long: Queuine tRNA-ribosyltransferase (373 aa).

Catalysis depends on aspartate 93, which acts as the Proton acceptor. Residues 93-97 (DSGGF), aspartate 147, glutamine 191, and glycine 218 contribute to the substrate site. The interval 249–255 (GVGAPRD) is RNA binding. Aspartate 268 acts as the Nucleophile in catalysis. An RNA binding; important for wobble base 34 recognition region spans residues 273 to 277 (TRNAR). Cysteine 306, cysteine 308, cysteine 311, and histidine 337 together coordinate Zn(2+).

This sequence belongs to the queuine tRNA-ribosyltransferase family. In terms of assembly, homodimer. Within each dimer, one monomer is responsible for RNA recognition and catalysis, while the other monomer binds to the replacement base PreQ1. It depends on Zn(2+) as a cofactor.

It catalyses the reaction 7-aminomethyl-7-carbaguanine + guanosine(34) in tRNA = 7-aminomethyl-7-carbaguanosine(34) in tRNA + guanine. It participates in tRNA modification; tRNA-queuosine biosynthesis. Functionally, catalyzes the base-exchange of a guanine (G) residue with the queuine precursor 7-aminomethyl-7-deazaguanine (PreQ1) at position 34 (anticodon wobble position) in tRNAs with GU(N) anticodons (tRNA-Asp, -Asn, -His and -Tyr). Catalysis occurs through a double-displacement mechanism. The nucleophile active site attacks the C1' of nucleotide 34 to detach the guanine base from the RNA, forming a covalent enzyme-RNA intermediate. The proton acceptor active site deprotonates the incoming PreQ1, allowing a nucleophilic attack on the C1' of the ribose to form the product. After dissociation, two additional enzymatic reactions on the tRNA convert PreQ1 to queuine (Q), resulting in the hypermodified nucleoside queuosine (7-(((4,5-cis-dihydroxy-2-cyclopenten-1-yl)amino)methyl)-7-deazaguanosine). This chain is Queuine tRNA-ribosyltransferase, found in Solidesulfovibrio magneticus (strain ATCC 700980 / DSM 13731 / RS-1) (Desulfovibrio magneticus).